Reading from the N-terminus, the 942-residue chain is Protein inturned (942 aa).

Residues 1–13 are compositionally biased toward basic and acidic residues; that stretch reads MADPARRDPRGRA. 2 disordered regions span residues 1 to 54 and 129 to 150; these read MADP…LEPE and PKRH…KHQS. Positions 22-32 are enriched in acidic residues; that stretch reads SQEEEEEESDS. Positions 33-48 are enriched in low complexity; it reads DAGASSLGSCSSASSD. Positions 138–150 are enriched in polar residues; it reads SNTGPVSILKHQS. Positions 189-267 constitute a PDZ domain; it reads LVGVIHQTKW…PMQVKLTFEN (79 aa). 2 positions are modified to phosphoserine: Ser674 and Ser678. Residues 707–752 are disordered; the sequence is KARKPSPSRIGGGREPGEGEENVGLSPHTTPDTVRKQRESEGSDDN.

It belongs to the inturned family. As to quaternary structure, component of the CPLANE (ciliogenesis and planar polarity effectors) complex, composed of INTU, FUZ and WDPCP. Interacts with CPLANE1. Interacts with NPHP4 and DAAM1; INTU is mediating the interaction between NPHP4 and DAAM1.

The protein resides in the cytoplasm. The protein localises to the cell surface. It is found in the cytoskeleton. Its subcellular location is the cilium basal body. It localises to the microtubule organizing center. The protein resides in the centrosome. The protein localises to the centriole. Its function is as follows. Plays a key role in ciliogenesis and embryonic development. Regulator of cilia formation by controlling the organization of the apical actin cytoskeleton and the positioning of the basal bodies at the apical cell surface, which in turn is essential for the normal orientation of elongating ciliary microtubules. Plays a key role in definition of cell polarity via its role in ciliogenesis but not via conversion extension. Has an indirect effect on hedgehog signaling. Proposed to function as core component of the CPLANE (ciliogenesis and planar polarity effectors) complex involved in the recruitment of peripheral IFT-A proteins to basal bodies. Required for recruitment of CPLANE2 to the mother centriole. Binds phosphatidylinositol 3-phosphate with highest affinity, followed by phosphatidylinositol 4-phosphate and phosphatidylinositol 5-phosphate. The sequence is that of Protein inturned (Intu) from Rattus norvegicus (Rat).